Here is a 183-residue protein sequence, read N- to C-terminus: Large ribosomal subunit protein uL6 (183 aa).

The protein belongs to the universal ribosomal protein uL6 family. In terms of assembly, part of the 50S ribosomal subunit.

This protein binds to the 23S rRNA, and is important in its secondary structure. It is located near the subunit interface in the base of the L7/L12 stalk, and near the tRNA binding site of the peptidyltransferase center. This chain is Large ribosomal subunit protein uL6, found in Methanococcus aeolicus (strain ATCC BAA-1280 / DSM 17508 / OCM 812 / Nankai-3).